The following is a 229-amino-acid chain: Large ribosomal subunit protein uL1 (229 aa).

Belongs to the universal ribosomal protein uL1 family. In terms of assembly, part of the 50S ribosomal subunit.

In terms of biological role, binds directly to 23S rRNA. The L1 stalk is quite mobile in the ribosome, and is involved in E site tRNA release. Its function is as follows. Protein L1 is also a translational repressor protein, it controls the translation of the L11 operon by binding to its mRNA. This is Large ribosomal subunit protein uL1 from Leifsonia xyli subsp. xyli (strain CTCB07).